A 1098-amino-acid polypeptide reads, in one-letter code: Mediator of RNA polymerase II transcription subunit 5 (1098 aa).

The tract at residues 1019-1041 is disordered; the sequence is PDDVQKSADMKPDTGIKEDDSEK. Basic and acidic residues predominate over residues 1021 to 1041; it reads DVQKSADMKPDTGIKEDDSEK.

The protein belongs to the Mediator complex subunit 5 family. As to quaternary structure, component of the Mediator complex.

Its subcellular location is the nucleus. Its function is as follows. Component of the Mediator complex, a coactivator involved in the regulated transcription of nearly all RNA polymerase II-dependent genes. Mediator functions as a bridge to convey information from gene-specific regulatory proteins to the basal RNA polymerase II transcription machinery. Mediator is recruited to promoters by direct interactions with regulatory proteins and serves as a scaffold for the assembly of a functional preinitiation complex with RNA polymerase II and the general transcription factors. This Eremothecium gossypii (strain ATCC 10895 / CBS 109.51 / FGSC 9923 / NRRL Y-1056) (Yeast) protein is Mediator of RNA polymerase II transcription subunit 5 (NUT1).